The chain runs to 334 residues: N-acetyl-gamma-glutamyl-phosphate reductase (334 aa).

The active site involves cysteine 145. Residues 173 to 192 (GISGSGQDPTEGTHYPNVTQ) are disordered.

Belongs to the NAGSA dehydrogenase family. Type 1 subfamily.

The protein resides in the cytoplasm. It catalyses the reaction N-acetyl-L-glutamate 5-semialdehyde + phosphate + NADP(+) = N-acetyl-L-glutamyl 5-phosphate + NADPH + H(+). It functions in the pathway amino-acid biosynthesis; L-arginine biosynthesis; N(2)-acetyl-L-ornithine from L-glutamate: step 3/4. Catalyzes the NADPH-dependent reduction of N-acetyl-5-glutamyl phosphate to yield N-acetyl-L-glutamate 5-semialdehyde. In Methanocella arvoryzae (strain DSM 22066 / NBRC 105507 / MRE50), this protein is N-acetyl-gamma-glutamyl-phosphate reductase.